We begin with the raw amino-acid sequence, 393 residues long: Thyrotropin-releasing hormone receptor (393 aa).

The Extracellular portion of the chain corresponds to 1 to 28; sequence MENDTVSEMNQTELQPQAAVALEYQVVT. N-linked (GlcNAc...) asparagine glycans are attached at residues asparagine 3 and asparagine 10. Residues 29–51 form a helical membrane-spanning segment; the sequence is ILLVVIICGLGIVGNIMVVLVVM. The Cytoplasmic segment spans residues 52 to 61; it reads RTKHMRTPTN. Residues 62–83 traverse the membrane as a helical segment; the sequence is CYLVSLAVADLMVLVAAGLPNI. Residues 84–99 lie on the Extracellular side of the membrane; the sequence is TDSIYGSWVYGYVGCL. Cysteines 98 and 179 form a disulfide. Residues 100-121 traverse the membrane as a helical segment; that stretch reads CITYLQYLGINASSCSITAFTI. The Cytoplasmic segment spans residues 122–144; that stretch reads ERYIAICHPIKAQFLCTFSRAKK. Residues 145-168 form a helical membrane-spanning segment; sequence IIIFVWAFTSIYCMLWFFLLDLNI. Topologically, residues 169-193 are extracellular; sequence STYKNAVVVSCGYKISRNYYSPIYL. A helical transmembrane segment spans residues 194 to 215; that stretch reads MDFGVFYVVPMILATVLYGFIA. The Cytoplasmic portion of the chain corresponds to 216 to 266; the sequence is RILFLNPIPSDPKENSKMWKNDSIHQNKNLNLNATNRCFNSTVSSRKQVTK. A helical membrane pass occupies residues 267–288; it reads MLAVVVILFALLWMPYRTLVVV. Over 289–296 the chain is Extracellular; it reads NSFLSSPF. The helical transmembrane segment at 297 to 319 threads the bilayer; the sequence is QENWFLLFCRICIYLNSAINPVI. The Cytoplasmic segment spans residues 320–393; the sequence is YNLMSQKFRA…FDDTCLASEN (74 aa).

It belongs to the G-protein coupled receptor 1 family.

The protein resides in the cell membrane. In terms of biological role, receptor for thyrotropin-releasing hormone (TRH). Upon ligand binding, this G-protein-coupled receptor triggers activation of the phosphatidylinositol (IP3)-calcium-protein kinase C (PKC) pathway. The polypeptide is Thyrotropin-releasing hormone receptor (Trhr) (Mus musculus (Mouse)).